The sequence spans 396 residues: Elongation factor Tu (396 aa).

Residues 11–205 (KPHVNIGTIG…IVDEYIPTPE (195 aa)) form the tr-type G domain. The tract at residues 20–27 (GHVDHGKT) is G1. Residue 20 to 27 (GHVDHGKT) coordinates GTP. Residue Thr-27 participates in Mg(2+) binding. The interval 61-65 (GITIN) is G2. The tract at residues 82–85 (DAPG) is G3. GTP-binding positions include 82–86 (DAPGH) and 137–140 (NKCD). Positions 137 to 140 (NKCD) are G4. Positions 175 to 177 (SAL) are G5.

It belongs to the TRAFAC class translation factor GTPase superfamily. Classic translation factor GTPase family. EF-Tu/EF-1A subfamily. In terms of assembly, monomer.

It localises to the cytoplasm. The enzyme catalyses GTP + H2O = GDP + phosphate + H(+). Its function is as follows. GTP hydrolase that promotes the GTP-dependent binding of aminoacyl-tRNA to the A-site of ribosomes during protein biosynthesis. This chain is Elongation factor Tu, found in Lactobacillus acidophilus (strain ATCC 700396 / NCK56 / N2 / NCFM).